Reading from the N-terminus, the 230-residue chain is Porin OmpL (230 aa).

Positions 1 to 20 (MKSLNTLVILTSVISTSVFA) are cleaved as a signal peptide.

Belongs to the oligogalacturonate-specific porin KdgM (TC 1.B.35) family. OmpL subfamily.

The protein localises to the cell outer membrane. Functionally, outer membrane channel protein that allows an efficient diffusion of low-molecular-weight solutes such as small sugars and tetraglycine. However, the specific substrate recognized by the OmpL channel is unknown. The sequence is that of Porin OmpL (ompL) from Salmonella typhi.